Reading from the N-terminus, the 1232-residue chain is Anoctamin-8 (1232 aa).

Positions 1–32 are disordered; it reads MAEAASGAGGTSLEGERGKRPPPEGEPAAPAS. Position 2 is an N-acetylalanine (alanine 2). At 2-244 the chain is on the extracellular side; that stretch reads AEAASGAGGT…DDICDYFGVK (243 aa). Basic and acidic residues predominate over residues 14-23; the sequence is EGERGKRPPP. The chain crosses the membrane as a helical span at residues 245–265; that stretch reads IAMYFAWLGFYTSAMVYPAVF. The Cytoplasmic segment spans residues 266-281; the sequence is GSVLYTFTEADQTSRD. The chain crosses the membrane as a helical span at residues 282 to 302; it reads VSCVVFALFNVIWSTLFLEEW. The Extracellular segment spans residues 303-356; sequence KRRGAELAYKWGTLDSPGEAVEEPRPQFRGVRRISPITRAEEFYYPPWKRLLFQ. Residue serine 318 is modified to Phosphoserine. The helical transmembrane segment at 357 to 377 threads the bilayer; it reads LLVSLPLCLACLVCVFLLMLG. Topologically, residues 378–400 are cytoplasmic; it reads CFQLQELVLSVKGLPRLARFLPK. A helical transmembrane segment spans residues 401–421; the sequence is VMLALLVSVSAEGYKKLAIWL. The Extracellular segment spans residues 422–437; the sequence is NDMENYRLESAYEKHL. Residues 438–458 form a helical membrane-spanning segment; sequence IIKVVLFQFVNSYLSLFYIGF. The Cytoplasmic segment spans residues 459 to 750; sequence YLKDMERLKE…YEDTFQDYQE (292 aa). Residues 524–650 are disordered; it reads RRLEPQADEG…SPTMVEKGLE (127 aa). Residues 532–551 are compositionally biased toward gly residues; sequence EGGGGGSGGGGRRCLSGGCG. Over residues 582 to 606 the composition is skewed to acidic residues; the sequence is EEDEDDEEEEDEEEEEDEEEGEEGG. Serine 669 bears the Phosphoserine mark. The interval 681 to 728 is disordered; it reads RAGGEGRDQGPDGGPDPEPGSNSDSTRRQRRQNRSSWIDPPEEEHSPQ. A helical transmembrane segment spans residues 751–771; the sequence is MFVQFGYVVLFSSAFPLAALC. Residues 772–807 lie on the Extracellular side of the membrane; sequence ALVNNLIEIRSDAFKLCTGLQRPFGQRVESIGQWQK. Phosphoserine; by FAM20C is present on serine 801. A helical membrane pass occupies residues 808–828; the sequence is VMEAMGVLAIVVNCYLIGQCG. Residues 829 to 841 are Cytoplasmic-facing; the sequence is QLQRLFPWLSPEA. Residues 842 to 862 traverse the membrane as a helical segment; that stretch reads AIVSVVVLEHFALLLKYLIHV. The Extracellular segment spans residues 863–1232; it reads AIPDIPGWVA…QAVCWPSGWH (370 aa). Disordered stretches follow at residues 888-970, 997-1152, and 1174-1232; these read RHER…GSLL, LAAA…WQWD, and PPCA…SGWH. Positions 904 to 932 are enriched in basic and acidic residues; the sequence is RREEEERQRHAEHHARREHDSGGREEARA. Low complexity-rich tracts occupy residues 933-953 and 997-1006; these read EGSG…AKGS and LAAAGAGATT. An Asymmetric dimethylarginine; alternate modification is found at arginine 1020. Arginine 1020 is subject to Omega-N-methylarginine; alternate. Positions 1031 to 1043 are enriched in basic and acidic residues; that stretch reads KSPETRRDSERSH. The span at 1078-1087 shows a compositional bias: polar residues; sequence TPSSGSSRVQ. 2 stretches are compositionally biased toward pro residues: residues 1130–1145 and 1197–1221; these read PAPP…PTPP and LPPP…PSPS.

It belongs to the anoctamin family. As to expression, expressed in embryonic stem cells, fetal brain and neural tissues.

It is found in the cell membrane. Its function is as follows. Does not exhibit calcium-activated chloride channel (CaCC) activity. This Homo sapiens (Human) protein is Anoctamin-8 (ANO8).